The sequence spans 470 residues: Adenosylhomocysteinase (470 aa).

Substrate contacts are provided by Thr61, Asp136, and Glu196. 197–199 (TTT) is an NAD(+) binding site. Substrate contacts are provided by Lys226 and Asp230. Residues Asn231, 260–265 (GYGDVG), Glu283, Asn318, 339–341 (IGH), and Asn384 each bind NAD(+).

Belongs to the adenosylhomocysteinase family. Requires NAD(+) as cofactor.

It localises to the cytoplasm. It catalyses the reaction S-adenosyl-L-homocysteine + H2O = L-homocysteine + adenosine. It participates in amino-acid biosynthesis; L-homocysteine biosynthesis; L-homocysteine from S-adenosyl-L-homocysteine: step 1/1. May play a key role in the regulation of the intracellular concentration of adenosylhomocysteine. This is Adenosylhomocysteinase from Aromatoleum aromaticum (strain DSM 19018 / LMG 30748 / EbN1) (Azoarcus sp. (strain EbN1)).